The following is a 297-amino-acid chain: Nitrogenase iron protein (297 aa).

Residue 11–18 (GKGGIGKS) coordinates ATP. [4Fe-4S] cluster is bound at residue C99. At R102 the chain carries ADP-ribosylarginine; by dinitrogenase reductase ADP-ribosyltransferase. C133 contacts [4Fe-4S] cluster.

The protein belongs to the NifH/BchL/ChlL family. Homodimer. Requires [4Fe-4S] cluster as cofactor. In terms of processing, the reversible ADP-ribosylation of Arg-102 inactivates the nitrogenase reductase and regulates nitrogenase activity.

It catalyses the reaction N2 + 8 reduced [2Fe-2S]-[ferredoxin] + 16 ATP + 16 H2O = H2 + 8 oxidized [2Fe-2S]-[ferredoxin] + 2 NH4(+) + 16 ADP + 16 phosphate + 6 H(+). Functionally, the key enzymatic reactions in nitrogen fixation are catalyzed by the nitrogenase complex, which has 2 components: the iron protein and the molybdenum-iron protein. The protein is Nitrogenase iron protein (nifH) of Rhizobium etli.